Reading from the N-terminus, the 89-residue chain is MKLTCVLIVAVLFLTACQLATAENSREEQGYSAVRSSDQIQDSDLKLTKSCTDDFEPCEAGFENCCSKSCFEFEDVYVCGVSIDYYDSR.

A signal peptide spans 1–22; it reads MKLTCVLIVAVLFLTACQLATA. Residues 23-49 constitute a propeptide that is removed on maturation; that stretch reads ENSREEQGYSAVRSSDQIQDSDLKLTK. Disulfide bonds link C51–C66, C58–C70, and C65–C79. C79 is subject to Cysteine amide. Positions 80-89 are excised as a propeptide; that stretch reads GVSIDYYDSR.

The protein belongs to the conotoxin O1 superfamily. Expressed by the venom duct.

The protein resides in the secreted. The polypeptide is Conotoxin Bu5 (Conus bullatus (Bubble cone)).